A 751-amino-acid polypeptide reads, in one-letter code: Methionine--tRNA ligase, cytoplasmic (751 aa).

Ser2 is modified (N-acetylserine). The interval 36 to 92 is interaction with ARC1; sequence LKPEVDNDNAAMELRNTKEPFLLFDANAILRYVMDDFEGQTSDKYQFALASLQNLLY. The 'HIGH' region signature appears at 205–215; that stretch reads PYVNNVPHLGN. Residue Lys411 participates in ATP binding. Positions 525-529 match the 'KMSKS' region motif; sequence KFSKS.

It belongs to the class-I aminoacyl-tRNA synthetase family. Component of a yeast aminoacyl-tRNA synthase (aaRS) complex formed by methionyl-tRNA synthase MES1, glutamyl-tRNA synthase GUS1 and the tRNA aminoacylation cofactor ARC1 in a stoichiometric complex. Interacts (via N-ter) with ARC1 (via N-ter). Can also form a stable binary complex with ARC1 that is functional in terms of aminoacylation. ARC1 increases the affinity for cognate tRNAs due to the presence of a tRNA binding domain in the middle and C-terminal part of ARC1.

It is found in the cytoplasm. The catalysed reaction is tRNA(Met) + L-methionine + ATP = L-methionyl-tRNA(Met) + AMP + diphosphate. Its function is as follows. Catalyzes the attachment of methionine to tRNA(Met) in a two-step reaction: methionine is first activated by ATP to form Met-AMP and then transferred to the acceptor end of tRNA(Met). The chain is Methionine--tRNA ligase, cytoplasmic (MES1) from Saccharomyces cerevisiae (strain ATCC 204508 / S288c) (Baker's yeast).